Consider the following 1183-residue polypeptide: Probable RNA-dependent RNA polymerase 4 (1183 aa).

Belongs to the RdRP family. Expressed in shoot apical meristem (SAM) and panicles.

The enzyme catalyses RNA(n) + a ribonucleoside 5'-triphosphate = RNA(n+1) + diphosphate. Its function is as follows. Probably involved in the RNA silencing pathway and required for the generation of small interfering RNAs (siRNAs). The sequence is that of Probable RNA-dependent RNA polymerase 4 (RDR4) from Oryza sativa subsp. japonica (Rice).